The following is a 231-amino-acid chain: S-norcoclaurine synthase 1 (231 aa).

107–109 (YKE) serves as a coordination point for dopamine. Lys-121 functions as the Proton donor in the catalytic mechanism. (4-hydroxyphenyl)acetaldehyde is bound at residue Asp-140. Residues 210 to 230 (LLLCLIICLVIAGGMFVAGVP) traverse the membrane as a helical segment.

Belongs to the BetVI family. In terms of tissue distribution, detected in roots, stems, leaves, flower buds and germinating seeds.

The protein localises to the membrane. The catalysed reaction is (4-hydroxyphenyl)acetaldehyde + dopamine = (S)-norcoclaurine + H2O. It functions in the pathway alkaloid biosynthesis; (S)-reticuline biosynthesis. Its activity is regulated as follows. Activity doubles within 5 hours of elicitor treatment and continues to increase for at least 80 hours. Functionally, involved in the biosynthesis of (S)-coclaurine, the common precursor of all benzylisoquinoline alkaloids such as morphine, sanguinarine, codeine or papaverine. Condenses dopamine and 4-hydroxyphenylacetaldehyde. This chain is S-norcoclaurine synthase 1, found in Papaver somniferum (Opium poppy).